Here is a 385-residue protein sequence, read N- to C-terminus: MHAWDPPASLSRALPLASSVLMLLLSCLWLLGAGPSLRLAPELLTEPWQVHRLLTHALGHTALPGLLLSLLLLPTLGWWQECHLGTLRFLHNSAVLALATGLLAVLLAGLGLSSAAGGCGYMPVHLAMLAGQSYYPGWPQRTLPPWLLPWLLLALTLLLSSEPPFLQLLCGLLAGLAYAAGAFRWLELSERRLQVLQEGVLCRTLAGCWPLKLLPTPGSLGELPVTYPAGVRPATPRPPYLASSSSWPHTDGFAQLPPGLGPGQLTWKNSERDLDWAGPSFASATPMWAALDEQMLQEGIQASLLDVSVQGSQNTLWSPKPSVSSLRLQQLQHMGFPTEQAAVALAATGRVEGAVSLLVEGLVDTEALVTEERSGPAHCKDTGVS.

5 helical membrane-spanning segments follow: residues 13–33 (ALPLASSVLMLLLSCLWLLGA), 58–78 (LGHTALPGLLLSLLLLPTLGW), 93–113 (SAVLALATGLLAVLLAGLGLS), 146–166 (WLLPWLLLALTLLLSSEPPFL), and 168–188 (LLCGLLAGLAYAAGAFRWLEL). The region spanning 322–361 (SVSSLRLQQLQHMGFPTEQAAVALAATGRVEGAVSLLVEG) is the UBA domain.

The protein resides in the membrane. In Rattus norvegicus (Rat), this protein is Rhomboid domain-containing protein 3 (Rhbdd3).